The chain runs to 379 residues: Gap junction alpha-1 protein (379 aa).

The Cytoplasmic segment spans residues 2–23 (GDWSALGRLLDKVQAYSTAGGK). Residues 24 to 44 (VWLSVLFIFRILLLGTAVESA) traverse the membrane as a helical segment. Residues 45–76 (WGDEQSAFVCNTQQPGCENVCYDKSFPISHVR) lie on the Extracellular side of the membrane. Cystine bridges form between Cys-54–Cys-192 and Cys-187–Cys-198. The helical transmembrane segment at 77 to 97 (FWVLQIIFVSTPTLLYLAHVF) threads the bilayer. The Cytoplasmic portion of the chain corresponds to 98–163 (YLMRKEEKLN…TYIISILFKS (66 aa)). Residues 164–184 (VFEVGFIIIQWYMYGFSLSAI) form a helical membrane-spanning segment. The Extracellular segment spans residues 185-207 (YTCKRDPCPHQVDCFLSRPTEKT). A helical transmembrane segment spans residues 208-228 (IFIWFMLIVSIVSLALNIIEL). Residues 229 to 379 (FYVTYKSIKD…SRPRPDDLEI (151 aa)) are Cytoplasmic-facing. Residues 322–379 (STISNTHAQPFDFSDEHQNTKKMAPGHEMQPLTILDQRPSSRASSHASSRPRPDDLEI) form a disordered region. Over residues 359-371 (RPSSRASSHASSR) the composition is skewed to low complexity.

This sequence belongs to the connexin family. Alpha-type (group II) subfamily. In terms of assembly, a connexon is composed of a hexamer of connexins. Interacts with TMEM65. In terms of tissue distribution, expressed in most tissues. Highest levels found in eye and brain.

It localises to the cell membrane. It is found in the cell junction. The protein resides in the gap junction. One gap junction consists of a cluster of closely packed pairs of transmembrane channels, the connexons, through which materials of low MW diffuse from one cell to a neighboring cell. Plays an essential role in gap junction communication in the ventricles. This is Gap junction alpha-1 protein (gja1) from Xenopus laevis (African clawed frog).